The primary structure comprises 217 residues: Ribosomal RNA small subunit methyltransferase G (217 aa).

S-adenosyl-L-methionine contacts are provided by residues Gly-79, Leu-84, 102-104 (DST), 130-131 (VE), and Arg-144.

It belongs to the methyltransferase superfamily. RNA methyltransferase RsmG family.

The protein localises to the cytoplasm. Functionally, specifically methylates the N7 position of a guanine in 16S rRNA. This chain is Ribosomal RNA small subunit methyltransferase G, found in Chlorobaculum tepidum (strain ATCC 49652 / DSM 12025 / NBRC 103806 / TLS) (Chlorobium tepidum).